Reading from the N-terminus, the 876-residue chain is Beta-glucosidase 1 (876 aa).

The N-terminal stretch at 1–17 (MLMIVQLLVFALGLAVA) is a signal peptide. N-linked (GlcNAc...) asparagine glycosylation is found at Asn-22, Asn-75, Asn-224, and Asn-267. The active site involves Asp-295. N-linked (GlcNAc...) asparagine glycans are attached at residues Asn-332, Asn-339, Asn-372, Asn-389, Asn-426, Asn-544, Asn-585, Asn-739, Asn-780, and Asn-790.

It belongs to the glycosyl hydrolase 3 family.

It carries out the reaction Hydrolysis of terminal, non-reducing beta-D-glucosyl residues with release of beta-D-glucose.. The protein operates within glycan metabolism; cellulose degradation. This chain is Beta-glucosidase 1 (BGL1), found in Saccharomycopsis fibuligera (Yeast).